Reading from the N-terminus, the 579-residue chain is Trehalase (579 aa).

The N-terminal stretch at 1-15 is a signal peptide; it reads MRLFLLLVGLTTVIA. 2 N-linked (GlcNAc...) asparagine glycosylation sites follow: N29 and N58. Substrate-binding positions include R161, 168–169, N205, 214–216, 279–281, and G313; these read WD, RSQ, and RPE. Residue N205 is glycosylated (N-linked (GlcNAc...) asparagine). Residue D315 is the Proton donor/acceptor of the active site. A glycan (N-linked (GlcNAc...) asparagine) is linked at N331. The active-site Proton donor/acceptor is the E513. A substrate-binding site is contributed by E528. A compositionally biased stretch (polar residues) spans 560 to 569; it reads DASANNGQSN. The segment at 560 to 579 is disordered; sequence DASANNGQSNEESETDSKEK.

Belongs to the glycosyl hydrolase 37 family. In terms of tissue distribution, in midgut and Malpighian tubules.

The protein localises to the basolateral cell membrane. It carries out the reaction alpha,alpha-trehalose + H2O = alpha-D-glucose + beta-D-glucose. In terms of biological role, involved in uptake of hemolymph trehalose into epithelial cells in the midgut of feeding larvae. The protein is Trehalase of Bombyx mori (Silk moth).